Here is a 1383-residue protein sequence, read N- to C-terminus: ATP-dependent RNA helicase TDRD9 (1383 aa).

Residues 35–82 (EAPREEVQRSEEVPNEDPTAQAQVPVKATAPARPASTSGRSLSQRSSE) are disordered. Residues 36–46 (APREEVQRSEE) are compositionally biased toward basic and acidic residues. Low complexity predominate over residues 70 to 80 (STSGRSLSQRS). Residues 144–310 (ISLIESNSVV…FAVPVQNKMN (167 aa)) enclose the Helicase ATP-binding domain. 157–164 (GATGSGKS) is a binding site for ATP. A DEAH box motif is present at residues 256–259 (DEVH). The region spanning 378–545 (SGAQFVSERS…ILKVKLLDMG (168 aa)) is the Helicase C-terminal domain. Positions 945 to 1005 (HPHPDLVCLA…REIPCQFLEL (61 aa)) constitute a Tudor domain.

The protein belongs to the DEAD box helicase family. DEAH subfamily. Interacts with piRNA-associated proteins PIWIL1 and PIWIL4. Predominantly expressed in reproductive organs. Detected in mitotic spermatogonia, meiotic spermatocytes (predominantly at the pachytene stage), haploid spermatids in the testis, and in growing oocytes in the ovary (at protein level).

It is found in the cytoplasm. The protein resides in the nucleus. It carries out the reaction ATP + H2O = ADP + phosphate + H(+). Functionally, ATP-binding RNA helicase which plays a central role during spermatogenesis by repressing transposable elements and preventing their mobilization, which is essential for the germline integrity. Acts via the piRNA metabolic process, which mediates the repression of transposable elements during meiosis by forming complexes composed of piRNAs and Piwi proteins and governs the methylation and subsequent repression of transposons. Acts downstream of piRNA biogenesis: exclusively required for transposon silencing in the nucleus, suggesting that it acts as a nuclear effector in the nucleus together with PIWIL4. This Mus musculus (Mouse) protein is ATP-dependent RNA helicase TDRD9.